The chain runs to 205 residues: Ypt/Rab-type GTPase ypt7 (205 aa).

GTP contacts are provided by residues 17–23 (SGVGKTS), 33–40 (FSASYKAT), Gly66, 125–128 (NKID), and 157–159 (SAK). Residues 37–45 (YKATIGADF) carry the Effector region motif. Residues Cys203 and Cys205 are each lipidated (S-geranylgeranyl cysteine). At Cys205 the chain carries Cysteine methyl ester.

It belongs to the small GTPase superfamily. Rab family. As to quaternary structure, interacts with the Rab GDP dissociation inhibitor GDI1.

The protein localises to the vacuole. With respect to regulation, rab activation is generally mediated by a guanine exchange factor (GEF), while inactivation through hydrolysis of bound GTP is catalyzed by a GTPase activating protein (GAP). In terms of biological role, ypt/Rab-type GTPases are key regulators of membrane trafficking and intracellular vesicular transport. They act as molecular switches that convert between GTP-bound and GDP-bound states, and regulate virtually all steps of membrane traffic from the formation of the transport vesicle at the donor membrane to its fusion at the target membrane. In the GDP-bound state, Ypt proteins are predominantly cytosolic, solubilized through the interaction with a GDP dissociation inhibitor (GDI). In the GTP-bound state, the proteins are membrane bound and interact with specific effector proteins that select cargo, promote vesicle movement, or verify the correct site of fusion. Required for fungal morphogenesis, vacuole fusion, autophagy, stress resistance and pathogenicity. The sequence is that of Ypt/Rab-type GTPase ypt7 from Pyricularia oryzae (strain 70-15 / ATCC MYA-4617 / FGSC 8958) (Rice blast fungus).